Reading from the N-terminus, the 146-residue chain is Hemoglobin subunit beta (146 aa).

An N-acetylvaline modification is found at valine 1. A Globin domain is found at 2-146 (HLTPEEKNAV…VANALAHKYH (145 aa)). Threonine 12 is modified (phosphothreonine). Serine 44 bears the Phosphoserine mark. At lysine 59 the chain carries N6-acetyllysine. A heme b-binding site is contributed by histidine 63. Lysine 82 carries the post-translational modification N6-acetyllysine. Position 92 (histidine 92) interacts with heme b. S-nitrosocysteine is present on cysteine 93. An N6-acetyllysine modification is found at lysine 144.

This sequence belongs to the globin family. In terms of assembly, heterotetramer of two alpha chains and two beta chains. In terms of tissue distribution, red blood cells.

Its function is as follows. Involved in oxygen transport from the lung to the various peripheral tissues. This chain is Hemoglobin subunit beta (HBB), found in Macaca mulatta (Rhesus macaque).